Consider the following 358-residue polypeptide: 3-ketosteroid-9-alpha-monooxygenase, ferredoxin reductase component (358 aa).

Residues 12–124 (DHVLELQIAE…LAPSGNFVPT (113 aa)) form the FAD-binding FR-type domain. Residues 269-358 (ATAVVELDGQ…SDSVEVTYDE (90 aa)) form the 2Fe-2S ferredoxin-type domain. 4 residues coordinate [2Fe-2S] cluster: cysteine 305, cysteine 310, cysteine 313, and cysteine 343.

In terms of assembly, monomer. The two-component system 3-ketosteroid-9-alpha-monooxygenase is composed of an oxygenase component KshA and a reductase component KshB. FAD is required as a cofactor. It depends on [2Fe-2S] cluster as a cofactor.

It carries out the reaction androsta-1,4-diene-3,17-dione + 2 reduced [2Fe-2S]-[ferredoxin] + O2 + 2 H(+) = 9alpha-hydroxyandrosta-1,4-diene-3,17-dione + 2 oxidized [2Fe-2S]-[ferredoxin] + H2O. It participates in lipid metabolism; steroid biosynthesis. Its function is as follows. Involved in the degradation of cholesterol. Catalyzes the introduction of a 9a-hydroxyl moiety into 1,4-androstadiene-3,17-dione (ADD) to yield the 9alpha-hydroxy-1,4-androstadiene-3,17-dione (9OHADD) intermediate which spontaneously form 3-hydroxy-9,10-seconandrost-1,3,5(10)-triene-9,17-dione (HSA) via the meta-cleavage of ring B with concomitant aromatization of ring A. The chain is 3-ketosteroid-9-alpha-monooxygenase, ferredoxin reductase component (hmp) from Mycobacterium tuberculosis (strain CDC 1551 / Oshkosh).